The chain runs to 264 residues: ATP synthase subunit a (264 aa).

The next 7 helical transmembrane spans lie at 29 to 49, 90 to 110, 111 to 131, 134 to 154, 177 to 197, 208 to 228, and 235 to 255; these read TWHI…LWIF, IAPL…MDMI, PVDW…KVVP, DVNI…YYSI, IPVN…SLAL, LIFI…TLGV, and LIFH…LTIV.

The protein belongs to the ATPase A chain family. As to quaternary structure, F-type ATPases have 2 components, CF(1) - the catalytic core - and CF(0) - the membrane proton channel. CF(1) has five subunits: alpha(3), beta(3), gamma(1), delta(1), epsilon(1). CF(0) has three main subunits: a(1), b(2) and c(9-12). The alpha and beta chains form an alternating ring which encloses part of the gamma chain. CF(1) is attached to CF(0) by a central stalk formed by the gamma and epsilon chains, while a peripheral stalk is formed by the delta and b chains.

The protein resides in the cell inner membrane. Key component of the proton channel; it plays a direct role in the translocation of protons across the membrane. The polypeptide is ATP synthase subunit a (Shewanella denitrificans (strain OS217 / ATCC BAA-1090 / DSM 15013)).